The primary structure comprises 291 residues: ATP synthase subunit a (291 aa).

Helical transmembrane passes span 48–68 (IHLD…LVFW), 108–128 (IAPL…MDLI), 161–181 (DPNI…FYSI), 241–261 (LIFI…SVPW), and 262–282 (AIFH…LTIV).

It belongs to the ATPase A chain family. In terms of assembly, F-type ATPases have 2 components, CF(1) - the catalytic core - and CF(0) - the membrane proton channel. CF(1) has five subunits: alpha(3), beta(3), gamma(1), delta(1), epsilon(1). CF(0) has three main subunits: a(1), b(2) and c(9-12). The alpha and beta chains form an alternating ring which encloses part of the gamma chain. CF(1) is attached to CF(0) by a central stalk formed by the gamma and epsilon chains, while a peripheral stalk is formed by the delta and b chains.

The protein resides in the cell inner membrane. Key component of the proton channel; it plays a direct role in the translocation of protons across the membrane. In Acinetobacter baylyi (strain ATCC 33305 / BD413 / ADP1), this protein is ATP synthase subunit a.